A 955-amino-acid polypeptide reads, in one-letter code: Anoctamin-4 (955 aa).

Topologically, residues 1–352 (MEASSSGITN…FGEKIGLYFA (352 aa)) are extracellular. A disordered region spans residues 72 to 100 (CKDDDSLLHPGNLTSTSDDASRLEAGGET). Residues N83, N105, N257, and N288 are each glycosylated (N-linked (GlcNAc...) asparagine). Residues 353–373 (WLGWYTGMLFPAAFIGLFVFL) form a helical membrane-spanning segment. Over 374-424 (YGVTTLDHSQVSKEVCQATDIIMCPVCDKYCPFMRLSDSCVYAKVTHLFDN) the chain is Cytoplasmic. A helical membrane pass occupies residues 425–445 (GATVFFAVFMAVWATVFLEFW). Residues 446–505 (KRRRAVIAYDWDLIDWEEEEEEIRPQFEAKYSKKERMNPISGKPEPYQAFTDKCSRLIVS) are Extracellular-facing. The helical transmembrane segment at 506–526 (ASGIFFMICVVIAAVFGIVIY) threads the bilayer. At 527-547 (RVVTVSTFAAFKWALIRNNSQ) the chain is on the cytoplasmic side. Residues 548–568 (VATTGTAVCINFCIIMLLNVL) form a helical membrane-spanning segment. Topologically, residues 569–595 (YEKVALLLTNLEQPRTESEWENSFTLK) are extracellular. The chain crosses the membrane as a helical span at residues 596–616 (MFLFQFVNLNSSTFYIAFFLG). Residues 617–715 (RFTGHPGAYL…AYGLFDEYLE (99 aa)) are Cytoplasmic-facing. A helical transmembrane segment spans residues 716 to 736 (MILQFGFTTIFVAAFPLAPLL). Residues 737-768 (ALLNNIIEIRLDAYKFVTQWRRPLASRAKDIG) lie on the Extracellular side of the membrane. A helical membrane pass occupies residues 769–789 (IWYGILEGIGILSVITNAFVI). Topologically, residues 790-885 (AITSDFIPRL…QFWHVLAARL (96 aa)) are cytoplasmic. A helical transmembrane segment spans residues 886-906 (AFIIVFEHLVFCIKHLISYLI). At 907–955 (PDLPKDLRDRMRREKYLIQEMMYEAELERLQKERKERKKNGKAHHNEWP) the chain is on the extracellular side.

The protein belongs to the anoctamin family.

It is found in the cell membrane. It carries out the reaction a 1,2-diacyl-sn-glycero-3-phospho-L-serine(in) = a 1,2-diacyl-sn-glycero-3-phospho-L-serine(out). The catalysed reaction is a beta-D-galactosyl-(1&lt;-&gt;1')-N-acylsphing-4-enine(out) = a beta-D-galactosyl-(1&lt;-&gt;1')-N-acylsphing-4-enine(in). The enzyme catalyses a 1,2-diacyl-sn-glycero-3-phosphocholine(in) = a 1,2-diacyl-sn-glycero-3-phosphocholine(out). Its function is as follows. Has calcium-dependent phospholipid scramblase activity; scrambles phosphatidylserine, phosphatidylcholine and galactosylceramide. Does not exhibit calcium-activated chloride channel (CaCC) activity. This Homo sapiens (Human) protein is Anoctamin-4 (ANO4).